The sequence spans 2053 residues: Nuclear pore complex protein Nup98-Nup96 (2053 aa).

5 disordered regions span residues 43–222, 274–617, 638–662, 890–1027, and 1170–1243; these read GFGS…SFGA, YKTG…TTGS, QTGG…GSTG, KSSS…TRDG, and PDFD…FIKR. Positions 46 to 55 are enriched in low complexity; sequence STAQTTQPTT. The span at 56-66 shows a compositional bias: gly residues; the sequence is GGFGGFGGFGG. The span at 67-77 shows a compositional bias: low complexity; that stretch reads ATTTQQPAASP. Over residues 78–88 the composition is skewed to gly residues; it reads FGGGGTGGSGL. Residues 111–123 show a composition bias toward low complexity; it reads TTTTTTTQQPGAS. The span at 124 to 133 shows a compositional bias: gly residues; the sequence is PFGGTGGGLF. A compositionally biased stretch (low complexity) spans 134–147; the sequence is GSSAQTTTQQQGAS. Residues 166–195 show a composition bias toward gly residues; that stretch reads ATGGFGGFGGSTTSGTQLGGGGGATSGAFG. Residues 196–212 show a composition bias toward low complexity; it reads GSSSPFGGSGGATTSSP. Gly residues predominate over residues 276 to 285; the sequence is TGGGSGGGNS. The segment covering 290–299 has biased composition (polar residues); the sequence is TPTTQPSSPF. Residues 300–318 are compositionally biased toward low complexity; the sequence is GAQTTTQTTGGLFGGQTTT. Positions 319 to 334 are enriched in polar residues; the sequence is SPFGGQTSATPGSSLF. The span at 335 to 346 shows a compositional bias: low complexity; sequence GSTQPTQQQTSG. Residues 367 to 378 are compositionally biased toward polar residues; sequence MPSTGGSSLFGS. Low complexity predominate over residues 379-393; the sequence is TQPTQQQTGGAQPTQ. Polar residues-rich tracts occupy residues 394-425 and 459-488; these read SLFG…NTGS and TQPT…PTSQ. The segment covering 489–508 has biased composition (low complexity); sequence GTGLFGTTQPTTQGTGLFGT. Composition is skewed to polar residues over residues 509 to 536 and 543 to 555; these read SPTS…TSGT and QPPQ…TSLF. Low complexity predominate over residues 556–567; sequence GNTGTGATNTGT. 2 stretches are compositionally biased toward polar residues: residues 587-616 and 638-658; these read AQPS…NTTG and QTGG…FGNT. Composition is skewed to low complexity over residues 896–964 and 971–998; these read NNNN…NNIS and NNQS…QQQQ. Residues 999 to 1015 show a composition bias toward basic and acidic residues; it reads KEQKEEQPPKPIKEKEF. A Peptidase S59 domain is found at 1025-1164; that stretch reads RDGYQCVPSI…GTWVFTVKHF (140 aa). Positions 1178–1191 are enriched in low complexity; it reads QMQQQTQQKQQQTQ. Over residues 1192 to 1204 the composition is skewed to polar residues; the sequence is PSKVTFQQPSTKL.

This sequence belongs to the nucleoporin GLFG family. As to quaternary structure, nup98 interacts directly with Nup96. Post-translationally, autoproteolytically cleaved to yield Nup98 and Nup96 or Nup98 only, respectively.

Its subcellular location is the nucleus. The protein resides in the nuclear pore complex. It is found in the nucleus membrane. Its function is as follows. Nup98 and Nup96 play a role in the bidirectional transport across the nucleoporin complex (NPC). The repeat domain in Nup98 has a direct role in the transport. The chain is Nuclear pore complex protein Nup98-Nup96 (nup98) from Dictyostelium discoideum (Social amoeba).